The chain runs to 262 residues: Acyl-[acyl-carrier-protein]--UDP-N-acetylglucosamine O-acyltransferase (262 aa).

Belongs to the transferase hexapeptide repeat family. LpxA subfamily. As to quaternary structure, homotrimer.

The protein localises to the cytoplasm. The catalysed reaction is a (3R)-hydroxyacyl-[ACP] + UDP-N-acetyl-alpha-D-glucosamine = a UDP-3-O-[(3R)-3-hydroxyacyl]-N-acetyl-alpha-D-glucosamine + holo-[ACP]. The protein operates within glycolipid biosynthesis; lipid IV(A) biosynthesis; lipid IV(A) from (3R)-3-hydroxytetradecanoyl-[acyl-carrier-protein] and UDP-N-acetyl-alpha-D-glucosamine: step 1/6. Involved in the biosynthesis of lipid A, a phosphorylated glycolipid that anchors the lipopolysaccharide to the outer membrane of the cell. This chain is Acyl-[acyl-carrier-protein]--UDP-N-acetylglucosamine O-acyltransferase, found in Paraburkholderia xenovorans (strain LB400).